The sequence spans 634 residues: Threonine--tRNA ligase (634 aa).

Residues 1–61 (MISLKFPNNE…SESGEFRLYT (61 aa)) enclose the TGS domain. Positions 242 to 532 (DHRKIGQELD…LIEHYAGAFP (291 aa)) are catalytic. Zn(2+) contacts are provided by Cys333, His384, and His509.

It belongs to the class-II aminoacyl-tRNA synthetase family. Homodimer. The cofactor is Zn(2+).

The protein localises to the cytoplasm. The enzyme catalyses tRNA(Thr) + L-threonine + ATP = L-threonyl-tRNA(Thr) + AMP + diphosphate + H(+). Functionally, catalyzes the attachment of threonine to tRNA(Thr) in a two-step reaction: L-threonine is first activated by ATP to form Thr-AMP and then transferred to the acceptor end of tRNA(Thr). Also edits incorrectly charged L-seryl-tRNA(Thr). The polypeptide is Threonine--tRNA ligase (Carboxydothermus hydrogenoformans (strain ATCC BAA-161 / DSM 6008 / Z-2901)).